Here is a 96-residue protein sequence, read N- to C-terminus: DNA-directed RNA polymerase subunit Rpo11 (96 aa).

The protein belongs to the archaeal Rpo11/eukaryotic RPB11/RPC19 RNA polymerase subunit family. In terms of assembly, part of the RNA polymerase complex.

It localises to the cytoplasm. The catalysed reaction is RNA(n) + a ribonucleoside 5'-triphosphate = RNA(n+1) + diphosphate. In terms of biological role, DNA-dependent RNA polymerase (RNAP) catalyzes the transcription of DNA into RNA using the four ribonucleoside triphosphates as substrates. The polypeptide is DNA-directed RNA polymerase subunit Rpo11 (Nanoarchaeum equitans (strain Kin4-M)).